The primary structure comprises 550 residues: Zinc finger protein 382 (550 aa).

Positions 1-105 are mediates interaction with TRIM28; it reads MPLQGSVSFK…RHSRPLIFIN (105 aa). 2 represses transcription regions span residues 5-46 and 70-211; these read GSVS…FVSV and IFPS…PEQP. Residues 7-78 form the KRAB domain; that stretch reads VSFKDVTVDF…RIFPSYSYLE (72 aa). Residues 212 to 234 form a C2H2-type 1; degenerate zinc finger; it reads FDHNECEKSFLMKGMLFTHTRAH. 9 C2H2-type zinc fingers span residues 296-318, 324-346, 352-374, 380-402, 408-430, 436-458, 464-486, 492-514, and 520-542; these read FHCP…QRIH, YVCN…EKTH, FICI…HKTH, YECP…QRTH, YQCN…QRTH, YICN…QRIH, YICN…HRIH, NGCP…QKTH, and YECK…QKTH. Positions 296 to 550 are required for transcriptional repression activity; probably mediates sequence-specific DNA-binding; the sequence is FHCPYCGNNF…THKVETTGIQ (255 aa).

Belongs to the krueppel C2H2-type zinc-finger protein family. Interacts with TRIM28; enhances the transcriptional repressor activity. Specifically expressed in heart with a weaker expression also detected in skeletal muscle.

It localises to the nucleus. Its function is as follows. Functions as a sequence-specific transcriptional repressor. This is Zinc finger protein 382 (ZNF382) from Homo sapiens (Human).